The sequence spans 493 residues: MVEIKKICCIGAGYVGGPTCSVIARMCPEIRVTVVDVNEARINAWNSPTLPIYEPGLKEVVESCRGKNLFFSTNIDDAIREADLVFISVNTPTKTYGMGKGRAADLKYIEACARRIVQNSNGYKIVTEKSTVPVRAAESIRRIFDANTKPNLNLQVLSNPEFLAEGTAIKDLKNPDRVLIGGDETPEGQRAVQALCAVYEHWVPKEKILTTNTWSSELSKLAANAFLAQRISSINSISALCESTGADVEEVATAIGMDQRIGNKFLKASVGFGGGCFQKDVLNLVYLCEALNLPEVARYWQQVIDMNDYQRRRFASRIIDSLFNTVTDKKIAILGFAFKKDTGDTRESSSIYISKYLMDEGAHLHIYDPKVPREQIVVDLSHPGVSADDQVSRLVTISKDPYEACDGAHALVICTEWDMFKELDYERIHKRMLKPAFIFDGRRVLDGLHNELQTIGFQIETIGKKVSSKRIPYTPGEIPKFSLQDPPNKKPKV.

NAD(+) is bound by residues 11–16 (GAGYVG), Asp36, Arg41, and 89–93 (VNTPT). Positions 88-110 (SVNTPTKTYGMGKGRAADLKYIE) are disordered. Residue Lys107 is modified to N6-acetyllysine. The segment at 129-135 (KSTVPVR) is allosteric switch region. 130 to 132 (STV) lines the NAD(+) pocket. Glu161 functions as the Proton donor/acceptor in the catalytic mechanism. Substrate contacts are provided by residues 161 to 165 (EFLAE), 220 to 224 (KLAAN), Arg260, and 267 to 273 (KASVGFG). Glu165 lines the NAD(+) pocket. The active-site Proton donor/acceptor is the Lys220. The Nucleophile role is filled by Cys276. NAD(+) is bound at residue 276–279 (CFQK). Residues 321-325 (SLFNT) form an important for formation of active hexamer structure region. A substrate-binding site is contributed by 338-339 (FK). Arg346 lines the NAD(+) pocket. Arg442 lines the substrate pocket. Residues 466–493 (VSSKRIPYTPGEIPKFSLQDPPNKKPKV) are disordered. Thr474 is subject to Phosphothreonine.

The protein belongs to the UDP-glucose/GDP-mannose dehydrogenase family. As to quaternary structure, homohexamer.

The enzyme catalyses UDP-alpha-D-glucose + 2 NAD(+) + H2O = UDP-alpha-D-glucuronate + 2 NADH + 3 H(+). Its pathway is nucleotide-sugar biosynthesis; UDP-alpha-D-glucuronate biosynthesis; UDP-alpha-D-glucuronate from UDP-alpha-D-glucose: step 1/1. UDP-alpha-D-xylose (UDX) acts as a feedback inhibitor. It binds at the same site as the substrate, but functions as allosteric inhibitor by triggering a conformation change that disrupts the active hexameric ring structure and gives rise to an inactive, horseshoe-shaped hexamer. Catalyzes the formation of UDP-alpha-D-glucuronate, a constituent of complex glycosaminoglycans. Required for the biosynthesis of chondroitin sulfate and heparan sulfate. Required for embryonic development via its role in the biosynthesis of glycosaminoglycans. Required for proper brain and neuronal development. The chain is UDP-glucose 6-dehydrogenase (Ugdh) from Rattus norvegicus (Rat).